We begin with the raw amino-acid sequence, 383 residues long: Cytochrome b (383 aa).

Transmembrane regions (helical) follow at residues 32-52, 76-98, 113-133, and 179-199; these read FGSLLAVCLVIQILTGCFLAM, WLIRYTHANVASFFFIFVYCHIA, TWSIGVIILILMMAIAFLGYV, and FFSLHYILPFLLAALAVAHMI. Heme b is bound by residues histidine 82 and histidine 96. Residues histidine 183 and histidine 197 each contribute to the heme b site. An a ubiquinone-binding site is contributed by histidine 202. A run of 4 helical transmembrane segments spans residues 225–245, 289–309, 321–341, and 348–368; these read FIFKDLVTIFAFLLVLSIFVC, LLGVIAMFGSLLILLVLPLTD, LMKLSFWFFVVDFIILMWIGA, and YLEVGQIATAFYFAWFVFIVP.

It belongs to the cytochrome b family. As to quaternary structure, fungal cytochrome b-c1 complex contains 10 subunits; 3 respiratory subunits, 2 core proteins and 5 low-molecular weight proteins. Cytochrome b-c1 complex is a homodimer. Heme b serves as cofactor.

It is found in the mitochondrion inner membrane. Component of the ubiquinol-cytochrome c reductase complex (complex III or cytochrome b-c1 complex) that is part of the mitochondrial respiratory chain. The b-c1 complex mediates electron transfer from ubiquinol to cytochrome c. Contributes to the generation of a proton gradient across the mitochondrial membrane that is then used for ATP synthesis. The polypeptide is Cytochrome b (cob) (Schizophyllum commune (Split gill fungus)).